Consider the following 2175-residue polypeptide: Genome polyprotein (2175 aa).

A lipid anchor (N-myristoyl glycine; by host) is attached at glycine 2. At 2 to 1485 (GAQLSRNTAG…NVNRALAVIQ (1484 aa)) the chain is on the cytoplasmic side. Amphipathic alpha-helix stretches follow at residues 557 to 574 (ILQNDPGKMLKDAIDKQV) and 560 to 581 (NDPGKMLKDAIDKQVAGALVAG). Residues histidine 861 and aspartate 879 each act as for protease 2A activity in the active site. Zn(2+)-binding residues include cysteine 896 and cysteine 898. Residue cysteine 950 is the For protease 2A activity of the active site. Cysteine 956 and histidine 958 together coordinate Zn(2+). Positions 1090-1162 (SDNWMKKFTE…EHSSASQERQ (73 aa)) are membrane-binding. The interval 1090-1228 (SDNWMKKFTE…SPGTGQSLAT (139 aa)) is oligomerization. The interval 1111-1115 (AAKIS) is RNA-binding. One can recognise an SF3 helicase domain in the interval 1194–1352 (EKRVLGAMQF…YKRDGVTLDV (159 aa)). Cysteine 1359, cysteine 1370, and cysteine 1375 together coordinate Zn(2+). The C4-type; degenerate zinc-finger motif lies at 1359–1375 (CEDCSPANFKKCMPLIC). Positions 1403–1410 (ESNRRYNI) are RNA-binding. The tract at residues 1414–1419 (LEALFQ) is oligomerization. An intramembrane segment occupies 1486 to 1501 (SVSLIAAVAGTIYIVY). The Cytoplasmic portion of the chain corresponds to 1502 to 2175 (RLFSGMQGPY…ALERKWYDSF (674 aa)). Tyrosine 1511 is modified (O-(5'-phospho-RNA)-tyrosine). Residues 1532-1710 (GPLFDFGVSL…FAASLLRRYF (179 aa)) form the Peptidase C3 domain. Active-site for protease 3C activity residues include histidine 1571, glutamate 1602, and cysteine 1678. The RdRp catalytic domain maps to 1941–2056 (GELFGFDYTA…SYPYEIDASL (116 aa)). Mg(2+) contacts are provided by aspartate 1947 and aspartate 2042.

The protein belongs to the picornaviruses polyprotein family. In terms of assembly, interacts with capsid protein VP1 and capsid protein VP3 to form heterotrimeric protomers. As to quaternary structure, interacts with capsid protein VP0, and capsid protein VP3 to form heterotrimeric protomers. Five protomers subsequently associate to form pentamers which serve as building blocks for the capsid. Interacts with capsid protein VP2, capsid protein VP3 and capsid protein VP4 following cleavage of capsid protein VP0. Interacts with capsid protein VP1 and capsid protein VP3 in the mature capsid. In terms of assembly, interacts with capsid protein VP0 and capsid protein VP1 to form heterotrimeric protomers. Five protomers subsequently associate to form pentamers which serve as building blocks for the capsid. Interacts with capsid protein VP4 in the mature capsid. Interacts with protein 2C; this interaction may be important for virion morphogenesis. As to quaternary structure, interacts with capsid protein VP1 and capsid protein VP3. Homodimer. In terms of assembly, homohexamer; forms a hexameric ring structure with 6-fold symmetry characteristic of AAA+ ATPases. Interacts (via N-terminus) with host RTN3 (via reticulon domain); this interaction is important for viral replication. Interacts with capsid protein VP3; this interaction may be important for virion morphogenesis. As to quaternary structure, interacts with protein 3CD. Homodimer. Interacts with host GBF1. Interacts (via GOLD domain) with host ACBD3 (via GOLD domain); this interaction allows the formation of a viral protein 3A/ACBD3 heterotetramer with a 2:2 stoichiometry, which will stimulate the recruitment of host PI4KB in order to synthesize PI4P at the viral RNA replication sites. In terms of assembly, interacts with RNA-directed RNA polymerase. As to quaternary structure, interacts with protein 3AB and with RNA-directed RNA polymerase. Interacts with Viral protein genome-linked and with protein 3CD. Mg(2+) serves as cofactor. In terms of processing, specific enzymatic cleavages in vivo by the viral proteases yield processing intermediates and the mature proteins. Myristoylation is required for the formation of pentamers during virus assembly. Further assembly of 12 pentamers and a molecule of genomic RNA generates the provirion. Post-translationally, during virion maturation, immature virions are rendered infectious following cleavage of VP0 into VP4 and VP2. This maturation seems to be an autocatalytic event triggered by the presence of RNA in the capsid and it is followed by a conformational change infectious virion. In terms of processing, myristoylation is required during RNA encapsidation and formation of the mature virus particle. VPg is uridylylated by the polymerase into VPg-pUpU. This acts as a nucleotide-peptide primer for the genomic RNA replication.

The protein resides in the virion. Its subcellular location is the host cytoplasm. It is found in the host cytoplasmic vesicle membrane. The protein localises to the host nucleus. It catalyses the reaction a ribonucleoside 5'-triphosphate + H2O = a ribonucleoside 5'-diphosphate + phosphate + H(+). It carries out the reaction Selective cleavage of Tyr-|-Gly bond in the picornavirus polyprotein.. The enzyme catalyses RNA(n) + a ribonucleoside 5'-triphosphate = RNA(n+1) + diphosphate. The catalysed reaction is Selective cleavage of Gln-|-Gly bond in the poliovirus polyprotein. In other picornavirus reactions Glu may be substituted for Gln, and Ser or Thr for Gly.. Replication or transcription is subject to high level of random mutations by the nucleotide analog ribavirin. Functionally, forms an icosahedral capsid of pseudo T=3 symmetry with capsid proteins VP2 and VP3. The capsid is 300 Angstroms in diameter, composed of 60 copies of each capsid protein and enclosing the viral positive strand RNA genome. Capsid protein VP1 mainly forms the vertices of the capsid. Capsid protein VP1 interacts with host cell receptor to provide virion attachment to target host cells. This attachment induces virion internalization. Tyrosine kinases are probably involved in the entry process. After binding to its receptor, the capsid undergoes conformational changes. Capsid protein VP1 N-terminus (that contains an amphipathic alpha-helix) and capsid protein VP4 are externalized. Together, they shape a pore in the host membrane through which viral genome is translocated to host cell cytoplasm. In terms of biological role, forms an icosahedral capsid of pseudo T=3 symmetry with capsid proteins VP2 and VP3. The capsid is 300 Angstroms in diameter, composed of 60 copies of each capsid protein and enclosing the viral positive strand RNA genome. Its function is as follows. Lies on the inner surface of the capsid shell. After binding to the host receptor, the capsid undergoes conformational changes. Capsid protein VP4 is released, Capsid protein VP1 N-terminus is externalized, and together, they shape a pore in the host membrane through which the viral genome is translocated into the host cell cytoplasm. Component of immature procapsids, which is cleaved into capsid proteins VP4 and VP2 after maturation. Allows the capsid to remain inactive before the maturation step. Functionally, cysteine protease that cleaves viral polyprotein and specific host proteins. It is responsible for the autocatalytic cleavage between the P1 and P2 regions, which is the first cleavage occurring in the polyprotein. Also cleaves the host translation initiation factor EIF4G1, in order to shut down the capped cellular mRNA translation. Inhibits the host nucleus-cytoplasm protein and RNA trafficking by cleaving host members of the nuclear pores. Counteracts stress granule formation probably by antagonizing its assembly or promoting its dissassembly. In terms of biological role, plays an essential role in the virus replication cycle by acting as a viroporin. Creates a pore in the host endoplasmic reticulum and as a consequence releases Ca2+ in the cytoplasm of infected cell. In turn, high levels of cytoplasmic calcium may trigger membrane trafficking and transport of viral ER-associated proteins to viroplasms, sites of viral genome replication. Its function is as follows. Induces and associates with structural rearrangements of intracellular membranes. Displays RNA-binding, nucleotide binding and NTPase activities. May play a role in virion morphogenesis and viral RNA encapsidation by interacting with the capsid protein VP3. Localizes the viral replication complex to the surface of membranous vesicles. Together with protein 3CD binds the Cis-Active RNA Element (CRE) which is involved in RNA synthesis initiation. Acts as a cofactor to stimulate the activity of 3D polymerase, maybe through a nucleid acid chaperone activity. Functionally, localizes the viral replication complex to the surface of membranous vesicles. It inhibits host cell endoplasmic reticulum-to-Golgi apparatus transport and causes the disassembly of the Golgi complex, possibly through GBF1 interaction. This would result in depletion of MHC, trail receptors and IFN receptors at the host cell surface. Plays an essential role in viral RNA replication by recruiting ACBD3 and PI4KB at the viral replication sites, thereby allowing the formation of the rearranged membranous structures where viral replication takes place. In terms of biological role, acts as a primer for viral RNA replication and remains covalently bound to viral genomic RNA. VPg is uridylylated prior to priming replication into VPg-pUpU. The oriI viral genomic sequence may act as a template for this. The VPg-pUpU is then used as primer on the genomic RNA poly(A) by the RNA-dependent RNA polymerase to replicate the viral genome. During genome replication, the VPg-RNA linkage is removed by the host TDP2, thereby accelerating replication. During the late stage of the replication cycle, host TDP2 is excluded from sites of viral RNA synthesis and encapsidation, allowing for the generation of progeny virions. Its function is as follows. Involved in the viral replication complex and viral polypeptide maturation. It exhibits protease activity with a specificity and catalytic efficiency that is different from protease 3C. Protein 3CD lacks polymerase activity. Protein 3CD binds to the 5'UTR of the viral genome. Replicates the viral genomic RNA on the surface of intracellular membranes. May form linear arrays of subunits that propagate along a strong head-to-tail interaction called interface-I. Covalently attaches UMP to a tyrosine of VPg, which is used to prime RNA synthesis. The positive stranded RNA genome is first replicated at virus induced membranous vesicles, creating a dsRNA genomic replication form. This dsRNA is then used as template to synthesize positive stranded RNA genomes. ss(+)RNA genomes are either translated, replicated or encapsidated. Functionally, major viral protease that mediates proteolytic processing of the polyprotein. Cleaves host EIF5B, contributing to host translation shutoff. Also cleaves host PABPC1, contributing to host translation shutoff. Cleaves host NLRP1, triggers host N-glycine-mediated degradation of the autoinhibitory NLRP1 N-terminal fragment. The chain is Genome polyprotein from Bos taurus (Bovine).